We begin with the raw amino-acid sequence, 83 residues long: Putative snRNP Sm-like protein (83 aa).

The Sm domain maps to 9-81 (KPMDVLKNAL…VIFVSPSKGD (73 aa)).

The protein belongs to the snRNP Sm proteins family.

This Thermoplasma volcanium (strain ATCC 51530 / DSM 4299 / JCM 9571 / NBRC 15438 / GSS1) protein is Putative snRNP Sm-like protein.